The primary structure comprises 103 residues: Large ribosomal subunit protein bL21 (103 aa).

This sequence belongs to the bacterial ribosomal protein bL21 family. In terms of assembly, part of the 50S ribosomal subunit. Contacts protein L20.

In terms of biological role, this protein binds to 23S rRNA in the presence of protein L20. This chain is Large ribosomal subunit protein bL21, found in Shewanella denitrificans (strain OS217 / ATCC BAA-1090 / DSM 15013).